The chain runs to 500 residues: Protein SLENDER RICE1-LIKE 2 (500 aa).

Positions 68–454 (KELEKMALRS…QRLYSASAWR (387 aa)) constitute a GRAS domain. Positions 75–135 (LRSVNLMVTC…DALAERLFPA (61 aa)) are leucine repeat I (LRI). The tract at residues 154–219 (FRGFYEAGPY…GGPPFLRITG (66 aa)) is VHIID. Positions 185 to 189 (VHVID) match the VHIID motif. The tract at residues 233–265 (DVGLRLAEFARSCSVPFAFRGIAADQLDGLRPW) is leucine repeat II (LRII). Positions 275-376 (VAINSVLQLH…EAYLQGEIAD (102 aa)) are PFYRE. The LXXLL motif motif lies at 283 to 287 (LHRLL). The interval 379–454 (SREGSSRVER…QRLYSASAWR (76 aa)) is SAW. Residues 466 to 500 (SGAADAMEESQNSNTNGGGGGSSGGGHGALNQIMQ) are disordered. Gly residues predominate over residues 481–493 (NGGGGGSSGGGHG).

This sequence belongs to the GRAS family. In terms of tissue distribution, expressed at low levels in leaf blades, leaf sheaths, rachis and flowers. Expressed in the embryo of immature seeds.

The protein resides in the nucleus. Its function is as follows. Probable transcriptional regulator that acts as a repressor of the gibberellin (GA) signaling pathway. Its repressive activity is weaker than that of SLR1. Its overexpression prevents the GA signaling pathway and induces a dwarf phenotype in Arabidopsis thaliana plants. This Oryza sativa subsp. japonica (Rice) protein is Protein SLENDER RICE1-LIKE 2.